Reading from the N-terminus, the 339-residue chain is uncharacterized protein (339 aa).

VOC domains follow at residues 2 to 127 (EFDY…VRSE) and 141 to 276 (TIDH…CLEI). Fe cation contacts are provided by H144, H222, and E306.

Belongs to the 4HPPD family. It depends on Fe cation as a cofactor.

This is an uncharacterized protein from Synechocystis sp. (strain ATCC 27184 / PCC 6803 / Kazusa).